A 120-amino-acid chain; its full sequence is FK506-binding protein 1B (120 aa).

The disordered stretch occupies residues 1–24 (MNPPQGVTKTILRPGNGRDSPHTG). One can recognise a PPIase FKBP-type domain in the interval 24–120 (GDTVIIDYTG…LVLYVCSPAG (97 aa)).

Belongs to the FKBP-type PPIase family. FKBP1 subfamily.

The enzyme catalyses [protein]-peptidylproline (omega=180) = [protein]-peptidylproline (omega=0). Its function is as follows. PPIases accelerate the folding of proteins. It catalyzes the cis-trans isomerization of proline imidic peptide bonds in oligopeptides. This is FK506-binding protein 1B (FKBP3) from Emericella nidulans (strain FGSC A4 / ATCC 38163 / CBS 112.46 / NRRL 194 / M139) (Aspergillus nidulans).